The primary structure comprises 291 residues: Nucleotide-binding protein EUBREC_0697 (291 aa).

Residue 8–15 (GMSGAGKS) coordinates ATP. Residue 59–62 (DVRN) participates in GTP binding.

It belongs to the RapZ-like family.

Displays ATPase and GTPase activities. This Agathobacter rectalis (strain ATCC 33656 / DSM 3377 / JCM 17463 / KCTC 5835 / VPI 0990) (Eubacterium rectale) protein is Nucleotide-binding protein EUBREC_0697.